A 273-amino-acid polypeptide reads, in one-letter code: Beta-lactamase OXA-133 (273 aa).

Residues 1 to 17 form the signal peptide; it reads MNKYFTCYVVASLFFSG. C18 carries N-palmitoyl cysteine lipidation. A lipid anchor (S-diacylglycerol cysteine) is attached at C18. The Acyl-ester intermediate role is filled by S79. An N6-carboxylysine modification is found at K82. 216 to 218 is a substrate binding site; the sequence is KTG.

This sequence belongs to the class-D beta-lactamase family.

It localises to the cell membrane. It catalyses the reaction a beta-lactam + H2O = a substituted beta-amino acid. Its function is as follows. Catalyzes the hydrolysis of beta-lactam antibiotics. This Acinetobacter radioresistens protein is Beta-lactamase OXA-133.